Consider the following 45-residue polypeptide: Large ribosomal subunit protein bL34 (45 aa).

The span at 1 to 20 (MSKRTYQPNKRKRLKTHGFR) shows a compositional bias: basic residues. Residues 1–45 (MSKRTYQPNKRKRLKTHGFRSRMSTASGRRIISCRRRKNRETLTA) are disordered.

The protein belongs to the bacterial ribosomal protein bL34 family.

The sequence is that of Large ribosomal subunit protein bL34 from Tropheryma whipplei (strain Twist) (Whipple's bacillus).